The following is a 185-amino-acid chain: MAETAYTPRLRTEYDRKIKSALTEKFGYANVMQVPRLDKVVLNMGIGEAVNDRKKAETAAADLSLIAGQKAVVTYSRVAIATFKLRENQPIGCKVTLRKAKMYEFIDRLINVALPRVRDFRGLNPKSFDGRGNYSLGIKEHIIFPEIDFDKAGESWGMDITVCTTAATDDEARALLTAFNFPFRQ.

It belongs to the universal ribosomal protein uL5 family. Part of the 50S ribosomal subunit; part of the 5S rRNA/L5/L18/L25 subcomplex. Contacts the 5S rRNA and the P site tRNA. Forms a bridge to the 30S subunit in the 70S ribosome.

In terms of biological role, this is one of the proteins that bind and probably mediate the attachment of the 5S RNA into the large ribosomal subunit, where it forms part of the central protuberance. In the 70S ribosome it contacts protein S13 of the 30S subunit (bridge B1b), connecting the 2 subunits; this bridge is implicated in subunit movement. Contacts the P site tRNA; the 5S rRNA and some of its associated proteins might help stabilize positioning of ribosome-bound tRNAs. The chain is Large ribosomal subunit protein uL5 from Bradyrhizobium sp. (strain BTAi1 / ATCC BAA-1182).